The following is an 895-amino-acid chain: DNA mismatch repair protein MutS (895 aa).

An ATP-binding site is contributed by 607 to 614 (GPNMSGKS).

It belongs to the DNA mismatch repair MutS family.

Functionally, this protein is involved in the repair of mismatches in DNA. It is possible that it carries out the mismatch recognition step. This protein has a weak ATPase activity. This Bacillus cytotoxicus (strain DSM 22905 / CIP 110041 / 391-98 / NVH 391-98) protein is DNA mismatch repair protein MutS.